The sequence spans 123 residues: MAMNMSMTLCMFVMVVVAATVIDSTQLQEPDLSRMRRSGPADCCRMKECCTDRVNECLQRYSGREDKFVSFCYQEATVTCGSFNEIVGCCYGYQMCMIRVVKPNSLSGAHEACKTVSCGNPCA.

Residues 1 to 18 (MAMNMSMTLCMFVMVVVA) form the signal peptide. Residues 19–37 (ATVIDSTQLQEPDLSRMRR) constitute a propeptide that is removed on maturation. 5 disulfide bridges follow: cysteine 49-cysteine 80, cysteine 50-cysteine 89, cysteine 57-cysteine 72, cysteine 90-cysteine 118, and cysteine 96-cysteine 113.

As to quaternary structure, homodimer; disulfide-linked. Expressed by the venom duct.

It is found in the secreted. Its function is as follows. Potently and selectively blocks the desensitization of ionotropic glutamate AMPA receptors (GRIA1, GRIA2, GRIA3 and GRIA4). Binds to a different site than does the drug cyclothiazide. The toxin acts like a straitjacket on the 'gating ring' of the ligand-binding domain (LBD) of the receptor. It does so by restraining the domains via both intra- and interdimer cross-links such that agonist-induced closure of the LBD 'clamshells' is transduced into an irislike expansion of the gating ring. Compared to other desensitization blockers, it is a poor stabilizer of the open channel because toxin-bound AMPA receptors undergo frequent brief closures. In vitro, application of the toxin to hippocampal slices causes a large and rapid increase in resting AMPA receptor-mediated current leading to neuronal death. This is Con-ikot-ikot from Conus striatus (Striated cone).